A 437-amino-acid polypeptide reads, in one-letter code: Ribosomal protein uS12 methylthiotransferase RimO (437 aa).

The 116-residue stretch at 3–118 folds into the MTTase N-terminal domain; the sequence is KKFYITTLGC…AGKILREKFP (116 aa). Residues C12, C48, C81, C157, C161, and C164 each coordinate [4Fe-4S] cluster. In terms of domain architecture, Radical SAM core spans 143–370; that stretch reads NYSKPYAYVK…RDSHLEILEE (228 aa). The TRAM domain maps to 373-437; sequence ESRIGRTYDA…YEYDMNGTWV (65 aa).

It belongs to the methylthiotransferase family. RimO subfamily. It depends on [4Fe-4S] cluster as a cofactor.

Its subcellular location is the cytoplasm. It carries out the reaction L-aspartate(89)-[ribosomal protein uS12]-hydrogen + (sulfur carrier)-SH + AH2 + 2 S-adenosyl-L-methionine = 3-methylsulfanyl-L-aspartate(89)-[ribosomal protein uS12]-hydrogen + (sulfur carrier)-H + 5'-deoxyadenosine + L-methionine + A + S-adenosyl-L-homocysteine + 2 H(+). In terms of biological role, catalyzes the methylthiolation of an aspartic acid residue of ribosomal protein uS12. The sequence is that of Ribosomal protein uS12 methylthiotransferase RimO from Leptospira interrogans serogroup Icterohaemorrhagiae serovar Lai (strain 56601).